A 316-amino-acid chain; its full sequence is Nucleotide-binding protein NFA_35930 (316 aa).

Residue Gly32–Gly39 coordinates ATP. Asp83–Ser86 is a binding site for GTP.

The protein belongs to the RapZ-like family.

Its function is as follows. Displays ATPase and GTPase activities. The sequence is that of Nucleotide-binding protein NFA_35930 from Nocardia farcinica (strain IFM 10152).